A 295-amino-acid chain; its full sequence is THO complex subunit 4C (295 aa).

The segment at 1–67 (MSDALNMTLD…GPLAVNTRPS (67 aa)) is disordered. At Ser-2 the chain carries N-acetylserine. The segment covering 11-22 (EIVKKSKSERSA) has biased composition (basic and acidic residues). Over residues 38–55 (GRGGPNGVVGGGRGGGPV) the composition is skewed to gly residues. The 78-residue stretch at 107–184 (TTVYITNLDQ…RPMKLEILGG (78 aa)) folds into the RRM domain. The segment at 212 to 295 (QGVRGGRVGR…SYHAEAMNIS (84 aa)) is disordered. Gly residues-rich tracts occupy residues 213 to 227 (GVRGGRVGRGRGSGP) and 242 to 267 (VTAGRGGFRGRGRGNGGGRGNKSGGR). The span at 271–288 (KPVEKSAADLDKDLESYH) shows a compositional bias: basic and acidic residues.

The protein belongs to the ALYREF family. In terms of assembly, interacts with PARP1.

Its subcellular location is the nucleus. The protein localises to the nucleoplasm. The protein resides in the nucleolus. Export adapter involved in nuclear export of spliced and unspliced mRNA. This is THO complex subunit 4C from Arabidopsis thaliana (Mouse-ear cress).